The following is a 365-amino-acid chain: Patr class I histocompatibility antigen, A-2 alpha chain (365 aa).

Residues 1 to 24 (MAVMPPRTLLLLLSGALALTQTWA) form the signal peptide. The segment at 25–114 (GSHSMRYFFT…LRGYYNQSED (90 aa)) is alpha-1. The Extracellular segment spans residues 25–308 (GSHSMRYFFT…EPSSQPTIPI (284 aa)). Asn-110 carries an N-linked (GlcNAc...) asparagine glycan. Residues 115–206 (GSHTIQIMYG…ENGKETLQRT (92 aa)) are alpha-2. Cystine bridges form between Cys-125–Cys-188 and Cys-227–Cys-283. Residues 207–298 (DPPKTHMTHH…GLPKPLTLRW (92 aa)) form an alpha-3 region. The Ig-like C1-type domain occupies 209 to 295 (PKTHMTHHPI…QHEGLPKPLT (87 aa)). The tract at residues 299-308 (EPSSQPTIPI) is connecting peptide. A helical transmembrane segment spans residues 309 to 332 (VGIIAGLVLLGAVITGAVVAAVMW). The Cytoplasmic segment spans residues 333–365 (RRKSSDRKGGSYTQAASSDSAQGSDVSLTACKV). Residues 339 to 360 (RKGGSYTQAASSDSAQGSDVSL) are disordered. Phosphoserine is present on Ser-343. The residue at position 344 (Tyr-344) is a Phosphotyrosine. The segment covering 346–359 (QAASSDSAQGSDVS) has biased composition (low complexity). Residues Ser-349, Ser-350, Ser-352, Ser-356, and Ser-359 each carry the phosphoserine modification.

Belongs to the MHC class I family. As to quaternary structure, heterodimer of an alpha chain and a beta chain (beta-2-microglobulin).

The protein localises to the membrane. In terms of biological role, involved in the presentation of foreign antigens to the immune system. The polypeptide is Patr class I histocompatibility antigen, A-2 alpha chain (Pan troglodytes (Chimpanzee)).